We begin with the raw amino-acid sequence, 1033 residues long: Probable LRR receptor-like serine/threonine-protein kinase At1g56140 (1033 aa).

Residues 1-28 (MLRLWRYLCLLLTVWFLCNFGPVYVVRA) form the signal peptide. Residues 29 to 636 (QNRTGATTHP…PSKGKSMTGT (608 aa)) are Extracellular-facing. N-linked (GlcNAc...) asparagine glycosylation is found at Asn30, Asn60, and Asn94. LRR repeat units lie at residues 97–121 (ICRI…LWTL), 122–145 (EYLT…LGNL), 147–169 (RMRW…IGLL), 170–193 (TDLR…IGRC), 195–217 (KLQQ…FANL), 241–264 (WTKL…SFSN), 265–288 (LTSL…FIKD), 289–313 (MKSL…IGEY), 314–337 (SSLR…LFNL), 339–361 (QLTH…KGQS), 363–382 (SNVD…WVSL), 383–406 (PNLN…VLSG), and 422–445 (IYSD…VFER). Asn144 carries an N-linked (GlcNAc...) asparagine glycan. Residue Asn181 is glycosylated (N-linked (GlcNAc...) asparagine). 3 N-linked (GlcNAc...) asparagine glycosylation sites follow: Asn264, Asn280, and Asn301. N-linked (GlcNAc...) asparagine glycosylation is found at Asn347 and Asn351. An N-linked (GlcNAc...) asparagine glycan is attached at Asn393. A glycan (N-linked (GlcNAc...) asparagine) is linked at Asn579. The chain crosses the membrane as a helical span at residues 637–657 (IVGVIVGVGLLSIISGVVIFI). At 658 to 1033 (IRKRRKRYTD…MLGAQMNEGR (376 aa)) the chain is on the cytoplasmic side. A Phosphothreonine modification is found at Thr682. The Protein kinase domain maps to 693-951 (FDPSNKLGEG…LCTQTSHALR (259 aa)). ATP contacts are provided by residues 699–707 (LGEGGFGPV) and Lys721. A Phosphotyrosine modification is found at Tyr766. Asp817 acts as the Proton acceptor in catalysis. A phosphoserine mark is found at Ser821 and Ser850. Phosphothreonine occurs at positions 851 and 856. The residue at position 864 (Tyr864) is a Phosphotyrosine. The tract at residues 1012 to 1033 (SEISPRNNDARPMLGAQMNEGR) is disordered.

It belongs to the protein kinase superfamily. Ser/Thr protein kinase family.

The protein localises to the membrane. The enzyme catalyses L-seryl-[protein] + ATP = O-phospho-L-seryl-[protein] + ADP + H(+). It carries out the reaction L-threonyl-[protein] + ATP = O-phospho-L-threonyl-[protein] + ADP + H(+). The sequence is that of Probable LRR receptor-like serine/threonine-protein kinase At1g56140 from Arabidopsis thaliana (Mouse-ear cress).